The primary structure comprises 132 residues: MAGTLQFDLVSPERRLASFAATEVQVPGTDGDMTAMEGHAPTITTLRPGILRAQGPSGVQAYAVTGGFAEINATSISVLAEKAVAVEELTGTVLDEFIAEARELVSVALPEDKDMAERTLNDMLALRASAGH.

It belongs to the ATPase epsilon chain family. In terms of assembly, F-type ATPases have 2 components, CF(1) - the catalytic core - and CF(0) - the membrane proton channel. CF(1) has five subunits: alpha(3), beta(3), gamma(1), delta(1), epsilon(1). CF(0) has three main subunits: a, b and c.

It localises to the cell inner membrane. Its function is as follows. Produces ATP from ADP in the presence of a proton gradient across the membrane. The sequence is that of ATP synthase epsilon chain from Cereibacter sphaeroides (strain ATCC 17025 / ATH 2.4.3) (Rhodobacter sphaeroides).